The sequence spans 88 residues: Apolipoprotein C-I (88 aa).

The N-terminal stretch at 1 to 26 (MRLFLSLPVLVVVLAMVLEGPAPTQA) is a signal peptide.

Belongs to the apolipoprotein C1 family.

The protein resides in the secreted. Its function is as follows. Inhibitor of lipoprotein binding to the low density lipoprotein (LDL) receptor, LDL receptor-related protein, and very low density lipoprotein (VLDL) receptor. Associates with high density lipoproteins (HDL) and the triacylglycerol-rich lipoproteins in the plasma and makes up about 10% of the protein of the VLDL and 2% of that of HDL. Appears to interfere directly with fatty acid uptake and is also the major plasma inhibitor of cholesteryl ester transfer protein (CETP). Binds free fatty acids and reduces their intracellular esterification. Modulates the interaction of APOE with beta-migrating VLDL and inhibits binding of beta-VLDL to the LDL receptor-related protein. The sequence is that of Apolipoprotein C-I (APOC1) from Mirounga angustirostris (Northern elephant seal).